A 129-amino-acid chain; its full sequence is Phosphoribosyl-AMP cyclohydrolase (129 aa).

D94 lines the Mg(2+) pocket. C95 contacts Zn(2+). The Mg(2+) site is built by D96 and D98. Zn(2+) contacts are provided by C111 and C118.

This sequence belongs to the PRA-CH family. As to quaternary structure, homodimer. It depends on Mg(2+) as a cofactor. Zn(2+) is required as a cofactor.

Its subcellular location is the cytoplasm. It carries out the reaction 1-(5-phospho-beta-D-ribosyl)-5'-AMP + H2O = 1-(5-phospho-beta-D-ribosyl)-5-[(5-phospho-beta-D-ribosylamino)methylideneamino]imidazole-4-carboxamide. It functions in the pathway amino-acid biosynthesis; L-histidine biosynthesis; L-histidine from 5-phospho-alpha-D-ribose 1-diphosphate: step 3/9. Functionally, catalyzes the hydrolysis of the adenine ring of phosphoribosyl-AMP. This chain is Phosphoribosyl-AMP cyclohydrolase, found in Corynebacterium efficiens (strain DSM 44549 / YS-314 / AJ 12310 / JCM 11189 / NBRC 100395).